The primary structure comprises 433 residues: sn-glycerol-3-phosphate-binding periplasmic protein UgpB (433 aa).

An N-terminal signal peptide occupies residues methionine 1–alanine 25. 7 residues coordinate sn-glycerol 3-phosphate: tyrosine 67, aspartate 91, serine 146, serine 273, glycine 307, tyrosine 346, and arginine 397.

This sequence belongs to the bacterial solute-binding protein 1 family. In terms of assembly, the complex is composed of two ATP-binding proteins (UgpC), two transmembrane proteins (UgpA and UgpE) and a solute-binding protein (UgpB).

The protein localises to the periplasm. Part of the ABC transporter complex UgpBAEC involved in sn-glycerol-3-phosphate (G3P) import. Binds G3P. The chain is sn-glycerol-3-phosphate-binding periplasmic protein UgpB (ugpB) from Brucella suis biovar 1 (strain 1330).